Consider the following 117-residue polypeptide: UPF0342 protein lwe2240 (117 aa).

The protein belongs to the UPF0342 family.

In Listeria welshimeri serovar 6b (strain ATCC 35897 / DSM 20650 / CCUG 15529 / CIP 8149 / NCTC 11857 / SLCC 5334 / V8), this protein is UPF0342 protein lwe2240.